Consider the following 587-residue polypeptide: Protoheme IX farnesyltransferase (587 aa).

The tract at residues 1 to 317 (MAARSLMRIL…ISLTKPKVIS (317 aa)) is unknown. 16 consecutive transmembrane segments (helical) span residues 9 to 29 (ILLVGLGLTLATIISGALVTI), 58 to 78 (LLHRLFVALALLAVFAGLVAV), 93 to 113 (GIAAAFFLLQALAGALLVWGV), 123 to 143 (LSGALLAFGAQSLTIALIAVP), 172 to 192 (AAGVAALAIGARSVVPGFGMM), 195 to 215 (VPTNSVSAVGFAALLSVWMAL), 238 to 258 (SLFLPALALLALLGAFIPVAG), 260 to 280 (LISLTAIALLWAATIIAAVIL), 315 to 335 (VISLLLVTTLTTMFITEAGLP), 337 to 357 (WWLVIWTMIGGYLAAGGAGAI), 386 to 406 (AAFIFGLILSVLSIIVLWVFT), 409 to 429 (LAAFFALLGIIYYAWFYTGWL), 437 to 457 (IIIGGGAGAIPPLVGWTAVTG), 464 to 484 (VVLFAIIFYWTPPHFWALALV), 522 to 542 (LLPVAIGAMSWIYLIGAVVLG), and 560 to 580 (AIWGLYKYSLLYLALVFAAMV). The interval 318-587 (LLLVTTLTTM…AMVADRLIIG (270 aa)) is protoheme IX prenyltransferase.

In the C-terminal section; belongs to the UbiA prenyltransferase family. Protoheme IX farnesyltransferase subfamily.

It localises to the cell membrane. It carries out the reaction heme b + (2E,6E)-farnesyl diphosphate + H2O = Fe(II)-heme o + diphosphate. Its pathway is porphyrin-containing compound metabolism; heme O biosynthesis; heme O from protoheme: step 1/1. Converts heme B (protoheme IX) to heme O by substitution of the vinyl group on carbon 2 of heme B porphyrin ring with a hydroxyethyl farnesyl side group. This is Protoheme IX farnesyltransferase (ctaB) from Chloroflexus aurantiacus (strain ATCC 29366 / DSM 635 / J-10-fl).